Consider the following 269-residue polypeptide: Histone doublet H2B-H2A (269 aa).

The segment at 1-168 is histone fold; it reads MATQKETTRK…LAGNAARDSK (168 aa). The disordered stretch occupies residues 210-249; it reads RKKARKTTEKEASSPKKKAAPKKKKAASKQKKSLSDKELA. The span at 224–241 shows a compositional bias: basic residues; sequence PKKKAAPKKKKAASKQKK.

The protein localises to the host nucleus. The protein resides in the host cytoplasm. It localises to the virion. Its function is as follows. Histone-like protein that is recruited to viral factories during viral replication and participates in viral DNA packaging and virion production probably by forming unstable nucleosome-like particles. May compact the viral DNA. The chain is Histone doublet H2B-H2A from Melbournevirus (MelV).